The sequence spans 221 residues: Endonuclease V (221 aa).

2 residues coordinate Mg(2+): Asp38 and Asp104.

This sequence belongs to the endonuclease V family. It depends on Mg(2+) as a cofactor.

The protein localises to the cytoplasm. It catalyses the reaction Endonucleolytic cleavage at apurinic or apyrimidinic sites to products with a 5'-phosphate.. DNA repair enzyme involved in the repair of deaminated bases. Selectively cleaves double-stranded DNA at the second phosphodiester bond 3' to a deoxyinosine leaving behind the intact lesion on the nicked DNA. Recognizes only deoxyinosine. The chain is Endonuclease V from Archaeoglobus fulgidus (strain ATCC 49558 / DSM 4304 / JCM 9628 / NBRC 100126 / VC-16).